A 165-amino-acid polypeptide reads, in one-letter code: Anterior gradient protein 3 (165 aa).

A signal peptide spans 1 to 20 (MLHSALALCLLLITVSSNLA). A Prevents secretion from ER motif is present at residues 162 to 165 (QSEL).

This sequence belongs to the AGR family. In terms of assembly, interacts with LYPD3 and DAG1 (alphaDAG1). Expressed in the ciliated cells of the airway epithelium. Not detected in the mucous cells.

The protein resides in the endoplasmic reticulum. Its subcellular location is the cytoplasm. Its function is as follows. Required for calcium-mediated regulation of ciliary beat frequency and mucociliary clearance in the airway. Might be involved in the regulation of intracellular calcium in tracheal epithelial cells. The sequence is that of Anterior gradient protein 3 from Mus musculus (Mouse).